An 872-amino-acid chain; its full sequence is Homeobox-leucine zipper protein ROC6 (872 aa).

Disordered stretches follow at residues Val-28–Leu-53 and Asn-67–Thr-130. The span at Gly-74–Asp-85 shows a compositional bias: gly residues. Basic and acidic residues predominate over residues Ser-86 to Ser-99. Over residues Pro-119 to Thr-130 the composition is skewed to basic residues. A DNA-binding region (homeobox) is located at residues Lys-122–Gln-181. A coiled-coil region spans residues Gln-176–Ala-248. An START domain is found at Gly-340–Ile-583. The segment at His-792–Gly-818 is disordered.

The protein belongs to the HD-ZIP homeobox family. Class IV subfamily.

It localises to the nucleus. Functionally, probable transcription factor. This is Homeobox-leucine zipper protein ROC6 (ROC6) from Oryza sativa subsp. japonica (Rice).